The sequence spans 732 residues: Acylamino-acid-releasing enzyme (732 aa).

Met-1 carries the N-acetylmethionine modification. A phosphoserine mark is found at Ser-185 and Ser-187. Active-site charge relay system residues include Ser-587, Asp-675, and His-707.

As to quaternary structure, homotetramer. In terms of tissue distribution, expressed in erythrocytes (at protein level).

It is found in the cytoplasm. The enzyme catalyses Cleavage of an N-acetyl or N-formyl amino acid from the N-terminus of a polypeptide.. Homotetramerization is required for activity. Tetramerization results in the formation of a gated channel which is involved in substrate selection and substrate access to the catalytic sites. Functionally, this enzyme catalyzes the hydrolysis of the N-terminal peptide bond of an N-acetylated peptide to generate an N-acetylated amino acid and a peptide with a free N-terminus. It preferentially cleaves off Ac-Ala, Ac-Met and Ac-Ser. Also, involved in the degradation of oxidized and glycated proteins. The protein is Acylamino-acid-releasing enzyme (APEH) of Homo sapiens (Human).